Consider the following 1133-residue polypeptide: Protein TPR3 (1133 aa).

A LisH domain is found at 4-36; that stretch reads LSRELVFLILQFLDEEKFKETVHKLEQESGFYF. The CTLH domain maps to 34 to 92; sequence FYFNMKYFEDEVINGNWDEVERYLGGFTKVDDNRYSMKIFFEIRKQKYLEALDKHDRSK. Residues 287-307 form a disordered region; the sequence is PTTANPSMDYPSGDSDHVSKR. 12 WD repeats span residues 348–388, 410–449, 455–496, 499–540, 543–586, 590–629, 634–673, 771–810, 837–875, 878–918, 921–960, and 1014–1053; these read SQGS…RLVL, DPTVSVNRIIWSPDGTLFGVAYSRHIVQIYSYHGGDDIRQ, AHVG…KQFT, GHEA…SRVD, APGH…VKRT, FRKRSMGVVQFDTTRNRFLAAGDEFLIKIWDMDNTSLLTT, GGLPASPRVRFNKEGTLLAVSTHENGIKILANADGVRLLR, MRTSKISRLIYTNSGVAILALASNAVHLLWKWPRNDRNSS, NPEEAVHCFALSKNDSYVMSASGGKISLFNMMTFKTMTT, PPPP…VKSK, GHSKKITGLAFSNVLNVLVSSGADAQICVWSTDGWDKLKS, and ENSSPITHAMFSCDSQLIYASFLDATVCIFNASSLRLQCR. The interval 1099-1133 is disordered; it reads ESERKWGNPPPAENGSTSALSTPPNGASSSDQPER. Residues 1112–1133 show a composition bias toward polar residues; that stretch reads NGSTSALSTPPNGASSSDQPER.

Tetramer. Interacts with D53. Interacts with MODD and HDAC1. Interacts with WOX1. Interacts with MOF1. Expressed in panicles, stems, leaves, spikelets and seed endosperm.

Its function is as follows. Probable downstream regulator of strigolactones signaling. Functions in a complex with MODD and HDAC1 to down-regulate the histone acetylation level at BZIP46 target genes. BZIP46 is a positive regulator of abscisic acid (ABA) signaling and drought stress tolerance. In Oryza sativa subsp. japonica (Rice), this protein is Protein TPR3.